Here is a 205-residue protein sequence, read N- to C-terminus: Holliday junction branch migration complex subunit RuvA (205 aa).

Positions 1–63 (MIDFVEGTLS…EDAILLYGFA (63 aa)) are domain I. Residues 64–142 (TRDERDLFRK…GYTPSAILTV (79 aa)) are domain II. Positions 143-153 (AAGDLTAGEQA) are flexible linker. The segment at 153–205 (AVSALNEALDALTALGYSDGELQKIRNTLSEKSKEGDGVEKLIKQGLALLMRG) is domain III.

The protein belongs to the RuvA family. In terms of assembly, homotetramer. Forms an RuvA(8)-RuvB(12)-Holliday junction (HJ) complex. HJ DNA is sandwiched between 2 RuvA tetramers; dsDNA enters through RuvA and exits via RuvB. An RuvB hexamer assembles on each DNA strand where it exits the tetramer. Each RuvB hexamer is contacted by two RuvA subunits (via domain III) on 2 adjacent RuvB subunits; this complex drives branch migration. In the full resolvosome a probable DNA-RuvA(4)-RuvB(12)-RuvC(2) complex forms which resolves the HJ.

The protein localises to the cytoplasm. Functionally, the RuvA-RuvB-RuvC complex processes Holliday junction (HJ) DNA during genetic recombination and DNA repair, while the RuvA-RuvB complex plays an important role in the rescue of blocked DNA replication forks via replication fork reversal (RFR). RuvA specifically binds to HJ cruciform DNA, conferring on it an open structure. The RuvB hexamer acts as an ATP-dependent pump, pulling dsDNA into and through the RuvAB complex. HJ branch migration allows RuvC to scan DNA until it finds its consensus sequence, where it cleaves and resolves the cruciform DNA. This Brevibacillus brevis (strain 47 / JCM 6285 / NBRC 100599) protein is Holliday junction branch migration complex subunit RuvA.